We begin with the raw amino-acid sequence, 419 residues long: Cytosine permease (419 aa).

At 1 to 19 (MSQDNNFSQGPVPQSARKG) the chain is on the cytoplasmic side. A helical membrane pass occupies residues 20-39 (VLALTFVMLGLTFFSASMWT). The Periplasmic segment spans residues 40–51 (GGTLGTGLSYHD). A helical transmembrane segment spans residues 52-71 (FFLAVLIGNLLLGIYTSFLG). Topologically, residues 72-100 (YIGAKTGLTTHLLARFSFGVKGSWLPSLL) are cytoplasmic. A helical membrane pass occupies residues 101-120 (LGGTQVGWFGVGVAMFAIPV). Residues 121-127 (GKATGLD) lie on the Periplasmic side of the membrane. A helical transmembrane segment spans residues 128–147 (INLLIAVSGLLMTVTVFFGI). At 148–152 (SALTV) the chain is on the cytoplasmic side. Residues 153 to 172 (LSLIAVPAIACLGGYSVWLA) traverse the membrane as a helical segment. Over 173–192 (VNGMGGLDALKAVVPAQPLD) the chain is Periplasmic. Residues 193-212 (FNVALALVVGSFISAGTLTA) form a helical membrane-spanning segment. Over 213–221 (DFVRFGRNA) the chain is Cytoplasmic. A helical transmembrane segment spans residues 222–242 (KLAVLVAMVAFFLGNSLMFIF). The Periplasmic segment spans residues 243–257 (GAAGAAALGMADISD). Residues 258–277 (VMIAQGLLLPAIVVLGLNIW) traverse the membrane as a helical segment. The Cytoplasmic portion of the chain corresponds to 278 to 300 (TTNDNALYASGLGFANITGMSSK). A helical transmembrane segment spans residues 301–320 (TLSVINGIIGTVCALWLYNN). Position 321 (Phe-321) is a topological domain, periplasmic. A helical membrane pass occupies residues 322-341 (VGWLTFLSAAIPPVGGVIIA). The Cytoplasmic portion of the chain corresponds to 342 to 358 (DYLMNRRRYEHFATTRM). Residues 359–378 (MSVNWVAILAVALGIAAGHW) form a helical membrane-spanning segment. Topologically, residues 379–380 (LP) are periplasmic. A helical membrane pass occupies residues 381-400 (GIVPVNAVLGGALSYLILNP). Topologically, residues 401–419 (ILNRKTTAAMTHVEANSVE) are cytoplasmic.

This sequence belongs to the purine-cytosine permease (2.A.39) family.

Its subcellular location is the cell inner membrane. Its function is as follows. Required for cytosine transport into the cell. In Escherichia coli O157:H7, this protein is Cytosine permease (codB).